A 289-amino-acid polypeptide reads, in one-letter code: MITVRTIPELRAAIAAHPGAGRPGKRPAFVPTMGNLHDGHIALVRQARPLGDVLVASIFVNRLQFLPHEDFDSYPRTWEADCAKLEAAGCDIVFAPRESDLYPEPQTFKLQPDPQLADILEGHFRPGFFTGVCTVVMKLFSAVFFASGGGTAVFGKKDYQQLMVIRRMVQQFALPVEVVAGETARADDGLALSSRNGYLSTAERVQAVQLSAALRALAQAAQAPGAPPLAALEQQALQTLAQQGWAPDYLTVRQRHDLQPPAAGAAAGTLVALGAARLGSTRLIDNLEF.

Residue 33 to 40 (MGNLHDGH) participates in ATP binding. H40 acts as the Proton donor in catalysis. Q64 contacts (R)-pantoate. Residue Q64 coordinates beta-alanine. 155–158 (GKKD) provides a ligand contact to ATP. Q161 is a binding site for (R)-pantoate. ATP contacts are provided by residues A184 and 192 to 195 (LSSR).

Belongs to the pantothenate synthetase family. Homodimer.

The protein resides in the cytoplasm. The enzyme catalyses (R)-pantoate + beta-alanine + ATP = (R)-pantothenate + AMP + diphosphate + H(+). It functions in the pathway cofactor biosynthesis; (R)-pantothenate biosynthesis; (R)-pantothenate from (R)-pantoate and beta-alanine: step 1/1. Its function is as follows. Catalyzes the condensation of pantoate with beta-alanine in an ATP-dependent reaction via a pantoyl-adenylate intermediate. This Acidovorax sp. (strain JS42) protein is Pantothenate synthetase.